Here is a 76-residue protein sequence, read N- to C-terminus: U14-hexatoxin-Hi1a (76 aa).

Residues 1-18 (MMQLAVLICLSLVVNTFA) form the signal peptide. 3 cysteine pairs are disulfide-bonded: Cys21/Cys34, Cys27/Cys39, and Cys33/Cys61.

Expressed by the venom gland.

Its subcellular location is the secreted. Functionally, probable ion channel inhibitor. This is U14-hexatoxin-Hi1a from Hadronyche infensa (Fraser island funnel-web spider).